The chain runs to 55 residues: Sec-independent protein translocase protein TatA (55 aa).

The chain crosses the membrane as a helical span at residues 1–21 (MSLGPWQLFLVLIIILVLFGA).

It belongs to the TatA/E family. The Tat system comprises two distinct complexes: a TatABC complex, containing multiple copies of TatA, TatB and TatC subunits, and a separate TatA complex, containing only TatA subunits. Substrates initially bind to the TatABC complex, which probably triggers association of the separate TatA complex to form the active translocon.

The protein resides in the cell membrane. Its function is as follows. Part of the twin-arginine translocation (Tat) system that transports large folded proteins containing a characteristic twin-arginine motif in their signal peptide across membranes. TatA could form the protein-conducting channel of the Tat system. This chain is Sec-independent protein translocase protein TatA, found in Wolbachia pipientis wMel.